The chain runs to 754 residues: Nitrate reductase (754 aa).

A signal peptide (tat-type signal) is located at residues 1–31 (MKFTRRSFVKASALATAMVAAGCSPQPVAPK). The 4Fe-4S Mo/W bis-MGD-type domain occupies 39 to 95 (ATWYKTVCRYCGVGCGVMVAAKDNRVVAVKGDTENPVNKGLLCVKGYYLDRIMNTEE). Residues Cys46, Cys49, Cys53, and Cys81 each coordinate [4Fe-4S] cluster. Mo-bis(molybdopterin guanine dinucleotide) is bound by residues Lys83, Gln144, Asn169, Cys173, 256 to 258 (GTD), Met341, Gln345, Asn451, Lys497, Asp524, 642 to 651 (TGRILEHWHT), Asn728, and Lys745.

It belongs to the prokaryotic molybdopterin-containing oxidoreductase family. NasA/NapA/NarB subfamily. As to quaternary structure, component of the nitrate reductase NapAB complex composed of NapA and NapB. The cofactor is [4Fe-4S] cluster. Mo-bis(molybdopterin guanine dinucleotide) serves as cofactor. Predicted to be exported by the Tat system. The position of the signal peptide cleavage has not been experimentally proven.

It is found in the secreted. The catalysed reaction is 2 Fe(II)-[cytochrome] + nitrate + 2 H(+) = 2 Fe(III)-[cytochrome] + nitrite + H2O. Functionally, catalytic subunit of the nitrate reductase complex NapAB. Receives electrons from NapB and catalyzes the reduction of nitrate to nitrite. The sequence is that of Nitrate reductase from Symbiobacterium thermophilum (strain DSM 24528 / JCM 14929 / IAM 14863 / T).